The following is a 197-amino-acid chain: dTTP/UTP pyrophosphatase (197 aa).

Asp-70 (proton acceptor) is an active-site residue.

This sequence belongs to the Maf family. YhdE subfamily. Requires a divalent metal cation as cofactor.

Its subcellular location is the cytoplasm. It catalyses the reaction dTTP + H2O = dTMP + diphosphate + H(+). The catalysed reaction is UTP + H2O = UMP + diphosphate + H(+). Nucleoside triphosphate pyrophosphatase that hydrolyzes dTTP and UTP. May have a dual role in cell division arrest and in preventing the incorporation of modified nucleotides into cellular nucleic acids. The sequence is that of dTTP/UTP pyrophosphatase (yceF) from Shigella dysenteriae serotype 1 (strain Sd197).